The following is a 389-amino-acid chain: MFSLRSWRYTALAGDEDDLEGIDKKAFLASPLRSSSLRQRNQPKQLLLLLLRTIIVVSVITFAAIIGCWVFLSHGTTTTNPPQQCSTPAVRKEWRSLSPSAQAKYISAVQCLMYLPSVHKEGTTLYDDFVFGHSKTGSYSHYAASFLPWHRMYLHVYERALRDHCGYSESLPYWDWTLDSHHLSASPIWDPVTGFGGDGNPGGAETLHGGRCVVDGPFANSTRAWRALSEGHNHDVEYGPHCLSRGFIINNDDRTTLEMLHGLVSPSRVAQTLDKPDYIAFFEDFESGPHNAIPQFIRGDFLTFSAPNDPVFYLHHANVDRLWWLWQQRDPAGRLYQVRGPAKDFRYHEGHEVSEGSIEDVMPMGGLAEDIKMKSVMDTRAGFLCYEYE.

A helical membrane pass occupies residues 53–73; that stretch reads TIIVVSVITFAAIIGCWVFLS. Residues His-141 and His-150 each contribute to the Cu cation site. An N-linked (GlcNAc...) asparagine glycan is attached at Asn-220. His-290 and His-316 together coordinate Cu cation.

The protein belongs to the tyrosinase family. Cu(2+) serves as cofactor.

It localises to the membrane. It participates in mycotoxin biosynthesis. In terms of biological role, tyrosinase-like protein; part of the gene cluster that mediates the biosynthesis of the phomopsins, a group of hexapeptide mycotoxins which infects lupins and causes lupinosis disease in livestock. Within the pathway, phomQ1 functions as a halogenase, converting. The pathway starts with the processing of the precursor phomA by several endopeptidases including kexin proteases as well as the cluster-specific S41 family peptidase phomP1 and the oligopeptidase phomG to produce 10 identical copies of the hexapeptide Tyr-Val-Ile-Pro-Ile-Asp. After being excised from the precursor peptide, the core peptides are cyclized and modified post-translationally by enzymes encoded within the gene cluster. The timing and order of proteolysis of the phomA precursor and PTMs are still unknown. Two tyrosinase-like enzymes, phomQ1 and phomQ2, catalyze the chlorination and hydroxylation of Tyr, respectively. PhomYb, is proposed to be involved in the construction of the macrocyclic structure. The other 4 ustYa family proteins may be involved in PTMs that generate the unique structure of phomopsin A. PhomYa is required for the hydroxylation of C-beta of Tyr. PhomYc, phomYd, and phomYe are responsible for the biosynthesis of 2,3-dehydroisoleucine (dIle), 2,3-dehydroaspartic acid (dAsp), and 3,4-dehydroproline (dPro), respectively. While dIle formation by phomYc is indispensable for the installation of dAsp by phomYd, the order of the other PTMs have not been elucidated yet. Most of the biosynthetic enzymes likely have broad substrate specificity, and thus, there might be a metabolic grid from a precursor to phomopsin A. The enzyme(s) responsible for the biosynthesis of 3,4-dehydrovaline (dVal) have also not been identified yet. Finally, phomM acts as an S-adenosylmethionine-dependent alpha-N-methyltransferase that catalyzes two successive N-methylation reactions, converting N-desmethyl-phomopsin A to phomopsin A and phomopsin A further to an N,N-dimethylated congener called phomopsin E. This Diaporthe leptostromiformis (Lupinosis disease fungus) protein is Tyrosinase-like protein phomQ1.